The sequence spans 175 residues: Ribosome maturation factor RimM (175 aa).

One can recognise a PRC barrel domain in the interval 99 to 172 (EGEFHLLDLV…WLRLTPPPGL (74 aa)).

Belongs to the RimM family. Binds ribosomal protein uS19.

It is found in the cytoplasm. Its function is as follows. An accessory protein needed during the final step in the assembly of 30S ribosomal subunit, possibly for assembly of the head region. Essential for efficient processing of 16S rRNA. May be needed both before and after RbfA during the maturation of 16S rRNA. It has affinity for free ribosomal 30S subunits but not for 70S ribosomes. The chain is Ribosome maturation factor RimM from Synechococcus sp. (strain WH7803).